The sequence spans 116 residues: Somatostatin (116 aa).

The N-terminal stretch at 1–24 is a signal peptide; that stretch reads MLSCRLQCALAALCIVLALGGVTG. Residues 35–88 constitute a propeptide that is removed on maturation; that stretch reads LQKSLAAATGKQELAKYFLAELLSEPNQTENDALEPEDLPQAAEQDEMRLELQR. T43 carries the post-translational modification Threonine amide. Cysteines 105 and 116 form a disulfide.

This sequence belongs to the somatostatin family. Post-translationally, C-terminal amidation of the neuronostatin peptide is required for its biological activity, including for the regulation of mean arterial pressure. In the pancreas, somatostatin is expressed in delta cells of the islets of Langerhans. In the stomach, it is expressed in parietal cells of oxyntic mucosa and in the small intestine, it is found in the villus (at protein level). Neuronostatin is expressed in the pancreas in delta cells of the islets of Langerhans, as well as in the stomach, in parietal cells of oxyntic mucosa and in the small intestine, in the villus (at protein level).

The protein resides in the secreted. Inhibits the secretion of pituitary hormones, including that of growth hormone/somatotropin (GH1), PRL, ACTH, luteinizing hormone (LH) and TSH. Also impairs ghrelin- and GnRH-stimulated secretion of GH1 and LH; the inhibition of ghrelin-stimulated secretion of GH1 can be further increased by neuronostatin. Functionally, may enhance low-glucose-induced glucagon release by pancreatic alpha cells. This effect may be mediated by binding to GPR107 and PKA activation. May regulate cardiac contractile function. May compromise cardiomyocyte viability. In the central nervous system, may impair memory retention and may affect hippocampal excitability. May also have anxiolytic and anorexigenic effects. May play a role in arterial pressure regulation. May inhibit basal, but not ghrelin- or GnRH-stimulated secretion of GH1 or LH, but does not affect the release of other pituitary hormones, including PRL, ACTH, FSH or TSH. Potentiates inhibitory action of somatostatin on ghrelin-stimulated secretion of GH1, but not that on GnRH-stimulated secretion of LH. This chain is Somatostatin (Sst), found in Mus musculus (Mouse).